Here is a 257-residue protein sequence, read N- to C-terminus: Synaptosomal-associated protein 29 (257 aa).

The disordered stretch occupies residues 1–42 (MSGYPKSYNPFDDDVEDEDTRPAPWKDARDLPDGPDPPIDRQ). A compositionally biased stretch (basic and acidic residues) spans 20 to 32 (TRPAPWKDARDLP). A phosphoserine mark is found at serine 77, serine 78, serine 114, serine 163, serine 181, serine 203, and serine 209. In terms of domain architecture, t-SNARE coiled-coil homology spans 195-257 (RAYHQKIDSN…KSTEKKVRQL (63 aa)).

It belongs to the SNAP-25 family. In terms of assembly, forms a SNARE complex, composed of VAMP8, SNAP29 and STX17, involved in fusion of autophagosome with lysosome. Interacts with multiple syntaxins including STX6. Interacts with EIPR1. Interacts with STX17; this interaction is increased in the absence of TMEM39A. Widely expressed.

It is found in the cytoplasm. The protein localises to the golgi apparatus membrane. The protein resides in the cytoplasmic vesicle. It localises to the autophagosome membrane. Its subcellular location is the cell projection. It is found in the cilium membrane. Functionally, SNAREs, soluble N-ethylmaleimide-sensitive factor-attachment protein receptors, are essential proteins for fusion of cellular membranes. SNAREs localized on opposing membranes assemble to form a trans-SNARE complex, an extended, parallel four alpha-helical bundle that drives membrane fusion. SNAP29 is a SNARE involved in autophagy through the direct control of autophagosome membrane fusion with the lysososome membrane. Also plays a role in ciliogenesis by regulating membrane fusions. This Rattus norvegicus (Rat) protein is Synaptosomal-associated protein 29.